The chain runs to 188 residues: UPF0157 protein DR_2534 (188 aa).

The span at 1–12 (MGRGGRGVGGGR) shows a compositional bias: gly residues. Residues 1–37 (MGRGGRGVGGGRPEGHGASVEGGRTRQTEGMDLISPD) are disordered.

The protein belongs to the UPF0157 (GrpB) family.

The sequence is that of UPF0157 protein DR_2534 from Deinococcus radiodurans (strain ATCC 13939 / DSM 20539 / JCM 16871 / CCUG 27074 / LMG 4051 / NBRC 15346 / NCIMB 9279 / VKM B-1422 / R1).